Reading from the N-terminus, the 433-residue chain is MEPRVGNKFRLGRKIGSGSFGEIYLGTDVQTNEEVAIKLESVKTAHPQLSYESRIYRVLQGGTGIPNMKWYGVEGDYNVLVMDLLGPSLEDLFSYCKRQFSLKTVLMLADQMINRLEFIHSKSYLHRDIKPDNFLMGLGRRANQVYIIDYGLAKKYRDSSTHRHIPYRENKSLIGTPRYASLNTHLGIEQSRRDDIESLGYILMYFLKGSLPWQGLKAGNKKQKYDKISEKKVSTSIETLCRGHPTEFASYFHYCRSLRFDDKPDYAYLKRLFRNLFIREGFQFDFVFDWTVYKYQQSQSGNPQPRPHDGGVGTSSGLNPAVGNSEKRPDVPNQRTNPDFTLKQKDKNGNDSAIAKDKLLPGSLNLGRSEGSSSRRVVDTSSREPFSGGSDNANYETALKGIDGLRINNNAGDETAATPQSNGDDVEPQSKAL.

Residues 9-278 (FRLGRKIGSG…LKRLFRNLFI (270 aa)) form the Protein kinase domain. Residues 15–23 (IGSGSFGEI) and lysine 38 each bind ATP. Aspartate 128 (proton acceptor) is an active-site residue. Residues 297 to 433 (QSQSGNPQPR…DDVEPQSKAL (137 aa)) form a disordered region. Residues 342–359 (LKQKDKNGNDSAIAKDKL) show a composition bias toward basic and acidic residues. Positions 362–375 (GSLNLGRSEGSSSR) are enriched in low complexity. At serine 390 the chain carries Phosphoserine. The segment covering 407-423 (INNNAGDETAATPQSNG) has biased composition (polar residues).

It belongs to the protein kinase superfamily. CK1 Ser/Thr protein kinase family. Casein kinase I subfamily. In terms of assembly, monomer. Post-translationally, autophosphorylated.

The protein localises to the cytoplasm. The enzyme catalyses L-seryl-[protein] + ATP = O-phospho-L-seryl-[protein] + ADP + H(+). It catalyses the reaction L-threonyl-[protein] + ATP = O-phospho-L-threonyl-[protein] + ADP + H(+). Functionally, casein kinases are operationally defined by their preferential utilization of acidic proteins such as caseins as substrates. It can phosphorylate a large number of proteins. The protein is Casein kinase 1-like protein 5 of Arabidopsis thaliana (Mouse-ear cress).